The sequence spans 305 residues: rRNA 2'-O-methyltransferase fibrillarin (305 aa).

The segment at 1-70 (MAYTPGSRGG…SGGRGGAKGG (70 aa)) is disordered. The segment covering 7-69 (SRGGRGGSRG…SSGGRGGAKG (63 aa)) has biased composition (gly residues). Phosphoserine is present on residues S111 and S114. S-adenosyl-L-methionine contacts are provided by residues 160–161 (TS), 179–180 (EF), 204–205 (DA), and 224–227 (DVAQ).

It belongs to the methyltransferase superfamily. Fibrillarin family. As to quaternary structure, component of box C/D small nucleolar ribonucleoprotein (snoRNP) particles. By homology to other fibrillarins, some or all of the N-terminal domain arginines are modified to asymmetric dimethylarginine (DMA).

It is found in the nucleus. It localises to the nucleolus. The catalysed reaction is L-glutaminyl-[histone H2A] + S-adenosyl-L-methionine = N(5)-methyl-L-glutaminyl-[histone H2A] + S-adenosyl-L-homocysteine + H(+). Functionally, S-adenosyl-L-methionine-dependent methyltransferase that has the ability to methylate both RNAs and proteins. Involved in pre-rRNA processing by catalyzing the site-specific 2'-hydroxyl methylation of ribose moieties in pre-ribosomal RNA. Site specificity is provided by a guide RNA that base pairs with the substrate. Methylation occurs at a characteristic distance from the sequence involved in base pairing with the guide RNA. Also acts as a protein methyltransferase by mediating methylation of 'Gln-105' of histone H2A (H2AQ105me), a modification that impairs binding of the FACT complex and is specifically present at 35S ribosomal DNA locus. The sequence is that of rRNA 2'-O-methyltransferase fibrillarin (fib1) from Schizosaccharomyces pombe (strain 972 / ATCC 24843) (Fission yeast).